Here is a 386-residue protein sequence, read N- to C-terminus: Alanine racemase (386 aa).

The active-site Proton acceptor; specific for D-alanine is the Lys38. Lys38 is modified (N6-(pyridoxal phosphate)lysine). Residue Arg136 coordinates substrate. Residue Tyr267 is the Proton acceptor; specific for L-alanine of the active site. Met315 contacts substrate.

The protein belongs to the alanine racemase family. It depends on pyridoxal 5'-phosphate as a cofactor.

It catalyses the reaction L-alanine = D-alanine. It functions in the pathway amino-acid biosynthesis; D-alanine biosynthesis; D-alanine from L-alanine: step 1/1. In terms of biological role, catalyzes the interconversion of L-alanine and D-alanine. May also act on other amino acids. The chain is Alanine racemase (alr) from Clostridium perfringens (strain ATCC 13124 / DSM 756 / JCM 1290 / NCIMB 6125 / NCTC 8237 / Type A).